The primary structure comprises 408 residues: LL-diaminopimelate aminotransferase (408 aa).

Substrate-binding residues include tyrosine 15 and glycine 42. Pyridoxal 5'-phosphate contacts are provided by residues tyrosine 72, 108–109 (SK), tyrosine 132, asparagine 187, tyrosine 218, and 246–248 (SFS). Residues lysine 109, tyrosine 132, and asparagine 187 each contribute to the substrate site. Lysine 249 carries the post-translational modification N6-(pyridoxal phosphate)lysine. Residues arginine 257 and asparagine 292 each coordinate pyridoxal 5'-phosphate. Residues asparagine 292 and arginine 388 each contribute to the substrate site.

Belongs to the class-I pyridoxal-phosphate-dependent aminotransferase family. LL-diaminopimelate aminotransferase subfamily. As to quaternary structure, homodimer. It depends on pyridoxal 5'-phosphate as a cofactor.

It catalyses the reaction (2S,6S)-2,6-diaminopimelate + 2-oxoglutarate = (S)-2,3,4,5-tetrahydrodipicolinate + L-glutamate + H2O + H(+). The protein operates within amino-acid biosynthesis; L-lysine biosynthesis via DAP pathway; LL-2,6-diaminopimelate from (S)-tetrahydrodipicolinate (aminotransferase route): step 1/1. Its function is as follows. Involved in the synthesis of meso-diaminopimelate (m-DAP or DL-DAP), required for both lysine and peptidoglycan biosynthesis. Catalyzes the direct conversion of tetrahydrodipicolinate to LL-diaminopimelate. The polypeptide is LL-diaminopimelate aminotransferase (Prochlorococcus marinus (strain MIT 9312)).